A 387-amino-acid chain; its full sequence is Phosphoglycerate kinase (387 aa).

Substrate-binding positions include 21-23 (DLN), arginine 36, 59-62 (HLGR), arginine 113, and arginine 146. Residues lysine 197, glutamate 314, and 340–343 (GGDT) each bind ATP.

Belongs to the phosphoglycerate kinase family. Monomer.

Its subcellular location is the cytoplasm. The catalysed reaction is (2R)-3-phosphoglycerate + ATP = (2R)-3-phospho-glyceroyl phosphate + ADP. It participates in carbohydrate degradation; glycolysis; pyruvate from D-glyceraldehyde 3-phosphate: step 2/5. This Pseudomonas aeruginosa (strain ATCC 15692 / DSM 22644 / CIP 104116 / JCM 14847 / LMG 12228 / 1C / PRS 101 / PAO1) protein is Phosphoglycerate kinase.